The primary structure comprises 285 residues: 2-dehydro-3-deoxyphosphooctonate aldolase (285 aa).

The protein belongs to the KdsA family.

The protein localises to the cytoplasm. The catalysed reaction is D-arabinose 5-phosphate + phosphoenolpyruvate + H2O = 3-deoxy-alpha-D-manno-2-octulosonate-8-phosphate + phosphate. Its pathway is carbohydrate biosynthesis; 3-deoxy-D-manno-octulosonate biosynthesis; 3-deoxy-D-manno-octulosonate from D-ribulose 5-phosphate: step 2/3. It functions in the pathway bacterial outer membrane biogenesis; lipopolysaccharide biosynthesis. This is 2-dehydro-3-deoxyphosphooctonate aldolase from Albidiferax ferrireducens (strain ATCC BAA-621 / DSM 15236 / T118) (Rhodoferax ferrireducens).